The primary structure comprises 130 residues: Small ribosomal subunit protein uS8 (130 aa).

This sequence belongs to the universal ribosomal protein uS8 family. Part of the 30S ribosomal subunit.

One of the primary rRNA binding proteins, it binds directly to 16S rRNA central domain where it helps coordinate assembly of the platform of the 30S subunit. This is Small ribosomal subunit protein uS8 from Methanocella arvoryzae (strain DSM 22066 / NBRC 105507 / MRE50).